Here is an 88-residue protein sequence, read N- to C-terminus: Putative membrane protein insertion efficiency factor (88 aa).

Residues 68 to 88 (VPPPNSDTRARGEADARSHRL) form a disordered region. A compositionally biased stretch (basic and acidic residues) spans 75-88 (TRARGEADARSHRL).

Belongs to the UPF0161 family.

Its subcellular location is the cell inner membrane. In terms of biological role, could be involved in insertion of integral membrane proteins into the membrane. In Burkholderia orbicola (strain MC0-3), this protein is Putative membrane protein insertion efficiency factor.